The chain runs to 181 residues: ATP-dependent protease subunit HslV (181 aa).

Thr7 is a catalytic residue. Gly166, Cys169, and Thr172 together coordinate Na(+).

It belongs to the peptidase T1B family. HslV subfamily. In terms of assembly, a double ring-shaped homohexamer of HslV is capped on each side by a ring-shaped HslU homohexamer. The assembly of the HslU/HslV complex is dependent on binding of ATP.

It is found in the cytoplasm. The catalysed reaction is ATP-dependent cleavage of peptide bonds with broad specificity.. With respect to regulation, allosterically activated by HslU binding. In terms of biological role, protease subunit of a proteasome-like degradation complex believed to be a general protein degrading machinery. This Delftia acidovorans (strain DSM 14801 / SPH-1) protein is ATP-dependent protease subunit HslV.